Consider the following 367-residue polypeptide: Heme A synthase (367 aa).

A run of 5 helical transmembrane segments spans residues 25 to 45 (AIRIWLGCVLLALFALVLVGG), 111 to 131 (FLARAMGVIFGVPLLFFVLTG), 137 to 157 (LWLPLGGIFLLGGLQGAIGWW), 174 to 194 (LATHLVTACLIFASCMWFMRA), and 211 to 231 (LAGLIAFMSLFQIYLGALVAG). Residue His274 participates in heme binding. A run of 3 helical transmembrane segments spans residues 276 to 296 (LGAYALFAVVAVNMIISLRAA), 305 to 325 (SVVLFVLVLIQAILGITTLLL), and 327 to 347 (VPLHLALTHQAGALIVFGFAI). A heme-binding site is contributed by His335.

It belongs to the COX15/CtaA family. Type 2 subfamily. Interacts with CtaB. It depends on heme b as a cofactor.

It is found in the cell membrane. It carries out the reaction Fe(II)-heme o + 2 A + H2O = Fe(II)-heme a + 2 AH2. Its pathway is porphyrin-containing compound metabolism; heme A biosynthesis; heme A from heme O: step 1/1. Catalyzes the conversion of heme O to heme A by two successive hydroxylations of the methyl group at C8. The first hydroxylation forms heme I, the second hydroxylation results in an unstable dihydroxymethyl group, which spontaneously dehydrates, resulting in the formyl group of heme A. The chain is Heme A synthase from Rhizobium rhizogenes (strain K84 / ATCC BAA-868) (Agrobacterium radiobacter).